Here is a 91-residue protein sequence, read N- to C-terminus: Small ribosomal subunit protein uS15 (91 aa).

The protein belongs to the universal ribosomal protein uS15 family. Part of the 30S ribosomal subunit. Forms a bridge to the 50S subunit in the 70S ribosome, contacting the 23S rRNA.

Functionally, one of the primary rRNA binding proteins, it binds directly to 16S rRNA where it helps nucleate assembly of the platform of the 30S subunit by binding and bridging several RNA helices of the 16S rRNA. Forms an intersubunit bridge (bridge B4) with the 23S rRNA of the 50S subunit in the ribosome. The sequence is that of Small ribosomal subunit protein uS15 from Nautilia profundicola (strain ATCC BAA-1463 / DSM 18972 / AmH).